A 419-amino-acid chain; its full sequence is MRLGIALFSLIGLCHSVSALIAFPGAEGFGANAVGGRQGEIYVVTNLNDSGEGSLRDAVSATDRIVVFAVGGVIEISDRIVVSKRVTILGQTAPGDGITVYGNGWSFSNADDAIVRYIRIRMGKVGDSGKDAITIAEGSTMIFDHVSVSWGRDETFSISGTASNITIQNTIIAQGLETHSCGGLIQTGGGVSLFRNLYIDNKTRNPKVKGVNDFTNNVVYNWGGGGGYIAGDSSGDSYANIIGNYFISGPSTSVTAFTRGNEYFHGYVETNYYDPDRDGTLNGNELGVSASNYGGMALVDTKYDYPAVEYQMTPGEAVNYVTGYVGASKVRDSVDTQLIAQVKSWGTKGELISDEASMGGPGDLDGGSPPTDSDGDGIPDDAETEIGSDPNTADSMELHSSGYTYVEMWANSLVPSSYH.

The first 19 residues, 1-19 (MRLGIALFSLIGLCHSVSA), serve as a signal peptide directing secretion. 3 N-linked (GlcNAc...) asparagine glycosylation sites follow: Asn-48, Asn-164, and Asn-201. Arg-204 is a catalytic residue. Residues 261-296 (NEYFHGYVETNYYDPDRDGTLNGNELGVSASNYGGM) form the EF-hand domain. Ca(2+) is bound by residues Asp-274, Asp-276, Asp-278, Thr-280, and Glu-285. A disordered region spans residues 350–395 (ELISDEASMGGPGDLDGGSPPTDSDGDGIPDDAETEIGSDPNTADS). Over residues 373–386 (SDGDGIPDDAETEI) the composition is skewed to acidic residues.

The protein belongs to the polysaccharide lyase 1 family. Requires Ca(2+) as cofactor.

It is found in the secreted. The catalysed reaction is Eliminative cleavage of (1-&gt;4)-alpha-D-galacturonan to give oligosaccharides with 4-deoxy-alpha-D-galact-4-enuronosyl groups at their non-reducing ends.. Functionally, pectinolytic enzyme consist of four classes of enzymes: pectin lyase, polygalacturonase, pectin methylesterase and rhamnogalacturonase. Among pectinolytic enzymes, pectin lyase is the most important in depolymerization of pectin, since it cleaves internal glycosidic bonds of highly methylated pectins. Favors pectate, the anion, over pectin, the methyl ester. The polypeptide is Probable pectate lyase C (plyC) (Aspergillus terreus (strain NIH 2624 / FGSC A1156)).